We begin with the raw amino-acid sequence, 259 residues long: Ribonuclease PH (259 aa).

Residues Arg88 and 126–128 (GTR) each bind phosphate.

This sequence belongs to the RNase PH family. Homohexameric ring arranged as a trimer of dimers.

The catalysed reaction is tRNA(n+1) + phosphate = tRNA(n) + a ribonucleoside 5'-diphosphate. In terms of biological role, phosphorolytic 3'-5' exoribonuclease that plays an important role in tRNA 3'-end maturation. Removes nucleotide residues following the 3'-CCA terminus of tRNAs; can also add nucleotides to the ends of RNA molecules by using nucleoside diphosphates as substrates, but this may not be physiologically important. Probably plays a role in initiation of 16S rRNA degradation (leading to ribosome degradation) during starvation. The polypeptide is Ribonuclease PH (Mycobacterium leprae (strain Br4923)).